The following is a 327-amino-acid chain: Complex I intermediate-associated protein 30, mitochondrial (327 aa).

The N-terminal 24 residues, 1–24 (MALVHKLLRDTYILRKFSKPTSAL), are a transit peptide targeting the mitochondrion. Residues 42-63 (PVASPGKASSQRKTEGDLQGDH) are disordered. Residues 53–63 (RKTEGDLQGDH) show a composition bias toward basic and acidic residues. Ser318 is modified (phosphoserine).

Belongs to the CIA30 family. In terms of assembly, part of the mitochondrial complex I assembly/MCIA complex that comprises at least the core subunits TMEM126B, NDUFAF1, ECSIT and ACAD9 and complement subunits such as COA1 and TMEM186. Interacts with ECSIT. Interacts with ACAD9. At early stages of complex I assembly, it is found in intermediate subcomplexes that contain different subunits including NDUFB6, NDUFA6, NDUFA9, NDUFS3, NDUFS7, ND1, ND2 and ND3. Interacts with TMEM70 and TMEM242.

The protein localises to the mitochondrion. It is found in the mitochondrion matrix. Its function is as follows. As part of the MCIA complex, involved in the assembly of the mitochondrial complex I. The protein is Complex I intermediate-associated protein 30, mitochondrial of Gorilla gorilla gorilla (Western lowland gorilla).